We begin with the raw amino-acid sequence, 553 residues long: Phenylalanine--tRNA ligase alpha subunit (553 aa).

L-phenylalanine contacts are provided by threonine 400 and phenylalanine 479. Glutamate 481 is a binding site for Mg(2+).

This sequence belongs to the class-II aminoacyl-tRNA synthetase family. Phe-tRNA synthetase alpha subunit type 2 subfamily. As to quaternary structure, tetramer of two alpha and two beta subunits. The cofactor is Mg(2+).

Its subcellular location is the cytoplasm. The catalysed reaction is tRNA(Phe) + L-phenylalanine + ATP = L-phenylalanyl-tRNA(Phe) + AMP + diphosphate + H(+). The protein is Phenylalanine--tRNA ligase alpha subunit of Treponema pallidum (strain Nichols).